The sequence spans 1111 residues: Myosin IB heavy chain (1111 aa).

The Myosin motor domain maps to 9 to 691 (QGTDDLVMLP…TVFLLEEALD (683 aa)). 102 to 109 (GESGAGKT) serves as a coordination point for ATP. Position 332 is a phosphoserine (Ser332). The interval 547 to 627 (GSLQKKRPTT…GFAYRNTFDK (81 aa)) is actin-binding. In terms of domain architecture, TH1 spans 729–913 (KERQRNSIDR…KGLIGTIASG (185 aa)). Residues 910–1058 (IASGLPSSTD…PAPQPSRPTA (149 aa)) form a disordered region. The span at 914–928 (LPSSTDSTPKNYNPN) shows a compositional bias: polar residues. 3 stretches are compositionally biased toward low complexity: residues 929 to 944 (SMSQ…QSAG), 952 to 967 (GAGQ…QQRP), and 991 to 1012 (PMGA…LPQP). Residues 1017–1040 (GAPGGRGAPMGRGAPGGGPAGAGG) show a composition bias toward gly residues. The region spanning 1053–1111 (PSRPTAKALYDYDASSTDELSFKEGDIIFIVQKDNGGWTQGELKSGQKGWAPTNYLQYN) is the SH3 domain.

The protein belongs to the TRAFAC class myosin-kinesin ATPase superfamily. Myosin family. In terms of assembly, myosin I heavy chain is single-headed. Dimer of a heavy and a light chain. Inability to self-assemble into filaments.

It localises to the cell projection. It is found in the pseudopodium. Its subcellular location is the cytoplasm. The protein localises to the cell cortex. Myosin is a protein that binds to actin and has ATPase activity that is activated by actin. Myosin IB may have a role in chemotaxis and aggregation; it could serve to stabilize and even retract cortical structures, such as pseudopods and lamellopods. Involved in the whole cell motility of aggregation-stages cells. Overexpression results in significant decrease in the rate of cellular translocation and fluid-phase pinocytosis and abnormalities in the normal rearrangement of the actin cytoskeleton. The polypeptide is Myosin IB heavy chain (myoB) (Dictyostelium discoideum (Social amoeba)).